The primary structure comprises 1046 residues: Probable inorganic carbon transporter subunit DabA1 (1046 aa).

Zn(2+)-binding residues include Cys-462, Asp-464, His-721, and Cys-736.

The protein belongs to the inorganic carbon transporter (TC 9.A.2) DabA family. As to quaternary structure, forms a complex with DabB1. Zn(2+) serves as cofactor.

The protein localises to the cell inner membrane. Functionally, part of an energy-coupled inorganic carbon pump. In Halothiobacillus neapolitanus (strain ATCC 23641 / c2) (Thiobacillus neapolitanus), this protein is Probable inorganic carbon transporter subunit DabA1.